Reading from the N-terminus, the 95-residue chain is Acylphosphatase (95 aa).

Residues 7–95 (CTMAWVYGSV…RSWDKFAILY (89 aa)) form the Acylphosphatase-like domain. Active-site residues include Arg22 and Asn40.

Belongs to the acylphosphatase family.

It catalyses the reaction an acyl phosphate + H2O = a carboxylate + phosphate + H(+). The sequence is that of Acylphosphatase (acyP) from Klebsiella pneumoniae subsp. pneumoniae (strain ATCC 700721 / MGH 78578).